We begin with the raw amino-acid sequence, 400 residues long: Dihydrolipoyllysine-residue succinyltransferase component of 2-oxoglutarate dehydrogenase complex (400 aa).

Positions 2-77 (GVKIIVPSLG…AVGEEIGDIN (76 aa)) constitute a Lipoyl-binding domain. Residue lysine 43 is modified to N6-lipoyllysine. Over residues 85–97 (NSNEAAKPQTASQ) the composition is skewed to polar residues. Residues 85 to 113 (NSNEAAKPQTASQPVPEKVPKKPAVANNT) form a disordered region. One can recognise a Peripheral subunit-binding (PSBD) domain in the interval 113-150 (TLAPSVQKLVTENKLDPNNIKGTGKDGRITKGDVLETM). Residues histidine 371 and aspartate 375 contribute to the active site.

It belongs to the 2-oxoacid dehydrogenase family. Forms a 24-polypeptide structural core with octahedral symmetry. Part of the 2-oxoglutarate dehydrogenase (OGDH) complex composed of E1 (2-oxoglutarate dehydrogenase), E2 (dihydrolipoamide succinyltransferase) and E3 (dihydrolipoamide dehydrogenase); the complex contains multiple copies of the three enzymatic components (E1, E2 and E3). (R)-lipoate serves as cofactor.

The enzyme catalyses N(6)-[(R)-dihydrolipoyl]-L-lysyl-[protein] + succinyl-CoA = N(6)-[(R)-S(8)-succinyldihydrolipoyl]-L-lysyl-[protein] + CoA. The protein operates within amino-acid degradation; L-lysine degradation via saccharopine pathway; glutaryl-CoA from L-lysine: step 6/6. E2 component of the 2-oxoglutarate dehydrogenase (OGDH) complex which catalyzes the second step in the conversion of 2-oxoglutarate to succinyl-CoA and CO(2). The chain is Dihydrolipoyllysine-residue succinyltransferase component of 2-oxoglutarate dehydrogenase complex (sucB) from Rickettsia bellii (strain RML369-C).